A 322-amino-acid polypeptide reads, in one-letter code: Fructose-1,6-bisphosphatase class 1 (322 aa).

Mg(2+) contacts are provided by glutamate 84, aspartate 103, leucine 105, and aspartate 106. Substrate is bound by residues 106–109, asparagine 198, and lysine 264; that span reads DGSS. Glutamate 270 is a Mg(2+) binding site.

The protein belongs to the FBPase class 1 family. In terms of assembly, homotetramer. The cofactor is Mg(2+).

The protein localises to the cytoplasm. The enzyme catalyses beta-D-fructose 1,6-bisphosphate + H2O = beta-D-fructose 6-phosphate + phosphate. It functions in the pathway carbohydrate biosynthesis; gluconeogenesis. This is Fructose-1,6-bisphosphatase class 1 from Colwellia psychrerythraea (strain 34H / ATCC BAA-681) (Vibrio psychroerythus).